Here is a 922-residue protein sequence, read N- to C-terminus: MISLKVCGFIQIWSQKTGMTKLKEALIETVQRQKEIKLVVTFKSGKFIRIFQLSNNIRSVVLRHCKKRQSHLRLTLKNNVFLFIDKLSYRDAKQLNMFLDIIHQNKSQQPMKSDDDWSVFESRNMLKEIDKTSFYSICNKPSYQKMPLFMSKSPTHVKKGILENQGGKGQNTLSSDVQTNEDILKEDNPVPNKKYKTDSLKYIQSNRKNPSSLEDLEKDRDLKLGPSFNTNCNGNPNLDETVLATQTLNAKNGLTSPLEPEHSQGDPRCNKAQVPLDSHSQQLQQGFPNLGNTCYMNAVLQSLFAIPSFADDLLTQGVPWEYIPFEALIMTLTQLLALKDFCSTKIKRELLGNVKKVISAVAEIFSGNMQNDAHEFLGQCLDQLKEDMEKLNATLNTGKECGDENSSPQMHVGSAATKVFVCPVVANFEFELQLSLICKACGHAVLKVEPNNYLSINLHQETKPLPLSIQNSLDLFFKEEELEYNCQMCKQKSCVARHTFSRLSRVLIIHLKRYSFNNAWLLVKNNEQVYIPKSLSLSSYCNESTKPPLPLSSSAPVGKCEVLEVSQEMISEINSPLTPSMKLTSESSDSLVLPVEPDKNADLQRFQRDCGDASQEQHQRDLENGSALESELVHFRDRAIGEKELPVADSLMDQGDISLPVMYEDGGKLISSPDTRLVEVHLQEVPQHPELQKYEKTNTFVEFNFDSVTESTNGFYDCKENRIPEGSQGMAEQLQQCIEESIIDEFLQQAPPPGVRKLDAQEHTEETLNQSTELRLQKADLNHLGALGSDNPGNKNILDAENTRGEAKELTRNVKMGDPLQAYRLISVVSHIGSSPNSGHYISDVYDFQKQAWFTYNDLCVSEISETKMQEARLHSGYIFFYMHNGIFEELLRKAENSRLPSTQAGVIPQGEYEGDSLYRPA.

Residues 160-196 (GILENQGGKGQNTLSSDVQTNEDILKEDNPVPNKKYK) are disordered. Residues 170–181 (QNTLSSDVQTNE) show a composition bias toward polar residues. Positions 285-885 (QGFPNLGNTC…SGYIFFYMHN (601 aa)) constitute a USP domain. Cys-294 acts as the Nucleophile in catalysis. Residue His-840 is the Proton acceptor of the active site.

The protein belongs to the peptidase C19 family.

It localises to the cytoplasm. Its subcellular location is the perinuclear region. It catalyses the reaction Thiol-dependent hydrolysis of ester, thioester, amide, peptide and isopeptide bonds formed by the C-terminal Gly of ubiquitin (a 76-residue protein attached to proteins as an intracellular targeting signal).. Its function is as follows. Deubiquitinase involved in innate antiviral immunity by mediating 'Lys-48'-linked deubiquitination of CGAS, thereby promoting its stabilization. The protein is Ubiquitin carboxyl-terminal hydrolase 29 of Homo sapiens (Human).